Consider the following 406-residue polypeptide: Tyrosine--tRNA ligase (406 aa).

Tyrosine 39 serves as a coordination point for L-tyrosine. The short motif at 44-53 (PTADSLHVGH) is the 'HIGH' region element. L-tyrosine-binding residues include tyrosine 172 and glutamine 176. The 'KMSKS' region motif lies at 232–236 (KMGKT). Lysine 235 is an ATP binding site. Residues 344–404 (KELLDVLVDR…LGKKKFYNIV (61 aa)) form the S4 RNA-binding domain.

It belongs to the class-I aminoacyl-tRNA synthetase family. TyrS type 1 subfamily. In terms of assembly, homodimer.

It is found in the cytoplasm. It catalyses the reaction tRNA(Tyr) + L-tyrosine + ATP = L-tyrosyl-tRNA(Tyr) + AMP + diphosphate + H(+). Functionally, catalyzes the attachment of tyrosine to tRNA(Tyr) in a two-step reaction: tyrosine is first activated by ATP to form Tyr-AMP and then transferred to the acceptor end of tRNA(Tyr). The polypeptide is Tyrosine--tRNA ligase (Fusobacterium nucleatum subsp. nucleatum (strain ATCC 25586 / DSM 15643 / BCRC 10681 / CIP 101130 / JCM 8532 / KCTC 2640 / LMG 13131 / VPI 4355)).